Consider the following 254-residue polypeptide: Mediator of RNA polymerase II transcription subunit 8 (254 aa).

Positions 154-190 (LEEREMGIQNVVTGLRRQLEDDERDEDEDEDDEEEEE) form a coiled coil. The interval 167–234 (GLRRQLEDDE…SQQVQKGAGP (68 aa)) is disordered. Over residues 173–199 (EDDERDEDEDEDDEEEEEGEGEDEEME) the composition is skewed to acidic residues.

This sequence belongs to the Mediator complex subunit 8 family. As to quaternary structure, component of the Mediator complex.

Its subcellular location is the nucleus. In terms of biological role, component of the Mediator complex, a coactivator involved in the regulated transcription of nearly all RNA polymerase II-dependent genes. Mediator functions as a bridge to convey information from gene-specific regulatory proteins to the basal RNA polymerase II transcription machinery. Mediator is recruited to promoters by direct interactions with regulatory proteins and serves as a scaffold for the assembly of a functional preinitiation complex with RNA polymerase II and the general transcription factors. The chain is Mediator of RNA polymerase II transcription subunit 8 (med8) from Aspergillus clavatus (strain ATCC 1007 / CBS 513.65 / DSM 816 / NCTC 3887 / NRRL 1 / QM 1276 / 107).